A 285-amino-acid chain; its full sequence is Small ribosomal subunit protein mS23 (285 aa).

Belongs to the mitochondrion-specific ribosomal protein mS23 family. In terms of assembly, component of the mitochondrial small ribosomal subunit.

It is found in the mitochondrion. In Debaryomyces hansenii (strain ATCC 36239 / CBS 767 / BCRC 21394 / JCM 1990 / NBRC 0083 / IGC 2968) (Yeast), this protein is Small ribosomal subunit protein mS23 (RSM25).